The primary structure comprises 2513 residues: Highly reducing polyketide synthase ACRTS2 (2513 aa).

The Ketosynthase family 3 (KS3) domain maps to 4–429 (DTPVAIIGVS…GSSSAVIIDR (426 aa)). Catalysis depends on for beta-ketoacyl synthase activity residues Cys174, His313, and His353. The interval 547-875 (VFTGQGAQYA…NYLPSLLRGT (329 aa)) is malonyl-CoA:ACP transacylase (MAT) domain. Catalysis depends on Ser635, which acts as the For malonyltransferase activity. The tract at residues 942–1074 (HALIGRKAPS…GKIEPEIADL (133 aa)) is N-terminal hotdog fold. The interval 942 to 1253 (HALIGRKAPS…TFRTVSSADD (312 aa)) is dehydratase (DH) domain. Residues 942–1254 (HALIGRKAPS…FRTVSSADDQ (313 aa)) form the PKS/mFAS DH domain. The Proton acceptor; for dehydratase activity role is filled by His974. The segment at 1092–1254 (AGVIEHDMDN…FRTVSSADDQ (163 aa)) is C-terminal hotdog fold. The active-site Proton donor; for dehydratase activity is Asp1161. The segment at 1407–1600 (SKIIGYLTEN…IPTNYRTDNP (194 aa)) is methyltransferase (CMet) domain. Residues 1816 to 2127 (GSPDTIYFRR…SRDHIGRLVV (312 aa)) are enoylreductase (ER) domain. Positions 2152 to 2327 (ATYLVAGGTR…YTVSIGLPVV (176 aa)) are ketoreductase (KR) domain. The Carrier domain occupies 2433 to 2510 (DPLTGLIEAL…ALAVNILAQR (78 aa)). Ser2470 carries the O-(pantetheine 4'-phosphoryl)serine modification.

Its pathway is mycotoxin biosynthesis. In terms of biological role, highly reducing polyketide synthase; part of the gene cluster that mediates the biosynthesis of the host-selective toxins (HSTs) ACR-toxins responsible for brown spot of rough lemon disease by the rough lemon pathotype. ACR-toxins cause uncoupling of mitochondrial oxidative-phosphorylation similar to that of classic protonophore. The structure of the major form of ACR-toxin (ACR-toxin I) consists of an alpha-dihydropyrone ring in a 19-carbon polyalcohol, a typical polyketide structure. Minor toxins were characterized as having a pyrone ring with polyalcohol side chains different in length and showing weaker toxicity. The highly reducing polyketide synthase ACRTS2 has all necessary enzymatic domains for multiple cycles of condensation and beta-keto processing. The cytochrome P450 monooxygenase ACRTS1 has also been shown to be essential for ACR-toxin biosynthesis, however its exact role in the pathway has not been elucidated yet. This chain is Highly reducing polyketide synthase ACRTS2, found in Alternaria alternata (Alternaria rot fungus).